We begin with the raw amino-acid sequence, 1161 residues long: Lateral signaling target protein 2 homolog (1161 aa).

6 disordered regions span residues 417–510, 583–831, 890–918, 935–978, 992–1014, and 1029–1095; these read ATGS…EVDD, AAGS…PTQS, MNSS…HNHP, DQQN…SVES, SSPV…TGQE, and GKAS…EPPR. Over residues 419–429 the composition is skewed to gly residues; sequence GSSGFGSGRGG. Over residues 438-453 the composition is skewed to basic residues; it reads PKQRHNQAHLRQRGAP. Residues 468–487 are compositionally biased toward basic and acidic residues; sequence GDDREPVVEEDNNNHLRKEI. Residues 488–510 are compositionally biased toward acidic residues; it reads EEEDVDDDMEEEEEDEEEDEVDD. Positions 583-601 are enriched in low complexity; the sequence is AAGSGGQQQQQQQQQLIDS. Over residues 669-704 the composition is skewed to acidic residues; that stretch reads SDYEEADVDDEPDDVDADDDDEEEDDVVGEVEEQND. A compositionally biased stretch (basic residues) spans 728–742; sequence KAARNHRKSSHHRPR. Residues 743-757 are compositionally biased toward low complexity; that stretch reads PSTSSSSSSAAYRNK. Positions 758–773 are enriched in basic residues; sequence SQSHQHHHHHHHHHHH. Low complexity-rich tracts occupy residues 781–800 and 807–831; these read GTSS…SNGS and MQQQ…PTQS. Over residues 896-910 the composition is skewed to acidic residues; the sequence is EPDEPPEPSGSEEES. Composition is skewed to polar residues over residues 935 to 948 and 956 to 967; these read DQQN…QSIY and EQDSVFGSSGDS. Over residues 996–1010 the composition is skewed to gly residues; it reads GAGGAGGGGMVGGSR. The span at 1054–1065 shows a compositional bias: low complexity; the sequence is SRSSPSSPVNSN. A compositionally biased stretch (basic and acidic residues) spans 1081-1094; sequence TAHEQQRRMPEEPP. Residues 1099–1159 form an FYVE-type zinc finger; that stretch reads DCDAPRCMAC…VCRDCYIHEV (61 aa). The Zn(2+) site is built by Cys-1105, Cys-1108, Cys-1121, Cys-1124, Cys-1129, Cys-1132, Cys-1151, and Cys-1154.

This sequence belongs to the lst-2 family.

In terms of biological role, negative regulator of epidermal growth factor receptor (EGFR) signaling. This Anopheles gambiae (African malaria mosquito) protein is Lateral signaling target protein 2 homolog.